Here is a 181-residue protein sequence, read N- to C-terminus: Oligoribonuclease (181 aa).

One can recognise an Exonuclease domain in the interval 8–171; the sequence is LIWIDLEMTG…DDIRESVAEL (164 aa). The active site involves Tyr129.

This sequence belongs to the oligoribonuclease family.

Its subcellular location is the cytoplasm. 3'-to-5' exoribonuclease specific for small oligoribonucleotides. This Yersinia enterocolitica serotype O:8 / biotype 1B (strain NCTC 13174 / 8081) protein is Oligoribonuclease.